Consider the following 141-residue polypeptide: Putative lipoprotein Tanf_09445 (141 aa).

An N-terminal signal peptide occupies residues 1–20; that stretch reads MKQKIILWIGALLLLTAGTG. Cys-21 is lipidated: N-palmitoyl cysteine. Cys-21 carries the S-diacylglycerol cysteine lipid modification.

Its subcellular location is the cell membrane. The polypeptide is Putative lipoprotein Tanf_09445 (Tannerella forsythia (strain ATCC 43037 / JCM 10827 / CCUG 21028 A / KCTC 5666 / FDC 338) (Bacteroides forsythus)).